We begin with the raw amino-acid sequence, 183 residues long: Dual-action ribosomal maturation protein DarP (183 aa).

The disordered stretch occupies residues 1-27; it reads MSSHSQEPVGEENFDDSEYDRPNKSQV. Positions 9–18 are enriched in acidic residues; it reads VGEENFDDSE.

The protein belongs to the DarP family.

The protein localises to the cytoplasm. Its function is as follows. Member of a network of 50S ribosomal subunit biogenesis factors which assembles along the 30S-50S interface, preventing incorrect 23S rRNA structures from forming. Promotes peptidyl transferase center (PTC) maturation. The polypeptide is Dual-action ribosomal maturation protein DarP (Bordetella pertussis (strain Tohama I / ATCC BAA-589 / NCTC 13251)).